A 374-amino-acid chain; its full sequence is D-amino-acid oxidase 3 (374 aa).

An N-terminal signal peptide occupies residues 1–19; that stretch reads MVKYDAIILGSGVLGLSIA. 7 residues coordinate FAD: Ser-11, Leu-14, Lys-34, Asp-35, Ala-46, Ser-47, and Gly-51. N-linked (GlcNAc...) asparagine glycosylation occurs at Asn-180. Cys-214 and Cys-271 are joined by a disulfide. Residues Tyr-229, Tyr-246, and Arg-296 each coordinate (R)-lactate. Tyr-229, Tyr-246, and Arg-296 together coordinate anthranilate. Residues Arg-296, Gly-342, Gly-345, Tyr-346, and Gln-347 each contribute to the FAD site. A Microbody targeting signal motif is present at residues 372–374; sequence AKL.

The protein belongs to the DAMOX/DASOX family. FAD serves as cofactor.

Its subcellular location is the peroxisome matrix. It catalyses the reaction a D-alpha-amino acid + O2 + H2O = a 2-oxocarboxylate + H2O2 + NH4(+). In terms of biological role, catalyzes the oxidative deamination of D-amino acids with broad substrate specificity. Enables the organism to utilize D-amino acids as a source of nutrients. Enables the organism to utilize D-asparate and D-glutamate as a nitrogen source and may also contribute to utlization of D-tryptophan, D-tyrosine and D-asparagine as a nitrogen source. Protects the organism from the toxicity of D-amino acids, including from D-glutamate. May play a role in its interaction with the host. The chain is D-amino-acid oxidase 3 from Cryptococcus deuterogattii (strain R265) (Cryptococcus gattii VGII (strain R265)).